The sequence spans 314 residues: Transcriptional activator RhrA (314 aa).

The 101-residue stretch at alanine 210–leucine 310 folds into the HTH araC/xylS-type domain. 2 DNA-binding regions (H-T-H motif) span residues threonine 228–glycine 249 and isoleucine 277–tyrosine 300.

Functionally, transcriptional activator of the rhizobactin regulon. In Rhizobium meliloti (strain 1021) (Ensifer meliloti), this protein is Transcriptional activator RhrA (rhrA).